A 62-amino-acid polypeptide reads, in one-letter code: Cytotoxin homolog (62 aa).

4 cysteine pairs are disulfide-bonded: C3–C22, C15–C40, C44–C55, and C56–C61.

Belongs to the three-finger toxin family. Short-chain subfamily. Orphan group XV sub-subfamily. In terms of tissue distribution, expressed by the venom gland.

The protein resides in the secreted. It localises to the target cell membrane. Functionally, has low cytotoxic activity. The polypeptide is Cytotoxin homolog (Naja kaouthia (Monocled cobra)).